Reading from the N-terminus, the 165-residue chain is UPF0669 protein v1g209471 (165 aa).

The N-terminal stretch at 1–23 is a signal peptide; that stretch reads MQGRYSAPLFLLLWLFFLHGTLC. N-linked (GlcNAc...) asparagine glycosylation is present at Asn38.

It belongs to the UPF0669 family.

Its subcellular location is the secreted. This is UPF0669 protein v1g209471 from Nematostella vectensis (Starlet sea anemone).